Reading from the N-terminus, the 528-residue chain is Cytochrome b5 reductase 4 (528 aa).

Residue methionine 1 is modified to N-acetylmethionine. The segment at 1–29 (MLNVPSQAFPAPGSQQRVSSQGRSKVPLK) is disordered. The segment covering 13–24 (GSQQRVSSQGRS) has biased composition (low complexity). The Cytochrome b5 heme-binding domain occupies 54–130 (LIEVTEEELK…LKECLVGRMA (77 aa)). The heme site is built by histidine 89 and histidine 112. Residues 172 to 263 (LSSPSYDWFQ…KESVSWQCLG (92 aa)) form the CS domain. The 113-residue stretch at 280–392 (LYYRRCQLIS…SGPEGDFKVS (113 aa)) folds into the FAD-binding FR-type domain. FAD-binding positions include 372-387 (DRLQIGDFISVSGPEG) and 399-431 (DLFLLAAGTGFTPMVTVLNYALSHMSSLRKVKL).

The protein belongs to the flavoprotein pyridine nucleotide cytochrome reductase family. The cofactor is FAD. In terms of tissue distribution, ubiquitously expressed. Isoform 2 is expressed in testis, brain, skeletal muscle and in the male germline.

Its subcellular location is the endoplasmic reticulum. The enzyme catalyses 2 Fe(III)-[cytochrome b5] + NADH = 2 Fe(II)-[cytochrome b5] + NAD(+) + H(+). In terms of biological role, NADH-cytochrome b5 reductase involved in endoplasmic reticulum stress response pathway. Plays a critical role in protecting pancreatic beta-cells against oxidant stress, possibly by protecting the cell from excess buildup of reactive oxygen species (ROS). In Mus musculus (Mouse), this protein is Cytochrome b5 reductase 4 (Cyb5r4).